An 81-amino-acid chain; its full sequence is MYIFHGRVQGIGLRARTYSMAKSLGLSGYIKNRDDGTVEAVFQGDEEKIKRIIEYIKGIAYIEKIDYFDDDVKYNDFQIRY.

Residues 1-81 (MYIFHGRVQG…VKYNDFQIRY (81 aa)) enclose the Acylphosphatase-like domain. Residues arginine 14 and asparagine 32 contribute to the active site.

It belongs to the acylphosphatase family.

The catalysed reaction is an acyl phosphate + H2O = a carboxylate + phosphate + H(+). The sequence is that of Acylphosphatase (acyP) from Picrophilus torridus (strain ATCC 700027 / DSM 9790 / JCM 10055 / NBRC 100828 / KAW 2/3).